Consider the following 351-residue polypeptide: E3 ubiquitin-protein ligase TRIM63 (351 aa).

The RING-type zinc finger occupies 23–79 (CPICLEMFTKPVVILPCQHNLCRKCANDIFQAANPYWTNRGGSVSMSGGRFRCPSCR). An interaction with TTN region spans residues 74–218 (RCPSCRHEVI…LSHKFDALYA (145 aa)). The B box-type zinc finger occupies 117-159 (GSHPMCKEHEDEKINIYCLTCEVPTCSLCKVFGAHQACEVAPL). Cys-122, His-125, Cys-145, and His-151 together coordinate Zn(2+). Residues 189–269 (SQLEDSCRVT…VETAIQSLDE (81 aa)) are a coiled coil. Positions 267–325 (LDEPGGATFLLSAKPLIKSIVEASKGCQLGKTEQGFENMDYFTLNLEHIAEALRAIDFG) constitute a COS domain. The span at 326 to 345 (TDEEEEFTEEEEEEDQEEGV) shows a compositional bias: acidic residues. A disordered region spans residues 326–351 (TDEEEEFTEEEEEEDQEEGVSTEGHQ).

Homodimer. Homooligomer and heterooligomer. Interacts with SUMO2, titin/TTN and GMEB1. Interacts with TRIM54 and probably with TRIM55 and TNNI3. Forms a ternary complex with RACK1 and PRKCE. Interacts with CKM. As to expression, muscle specific. Selectively expressed in heart and skeletal muscle.

The protein resides in the cytoplasm. It localises to the nucleus. Its subcellular location is the myofibril. The protein localises to the sarcomere. It is found in the m line. The protein resides in the z line. The catalysed reaction is S-ubiquitinyl-[E2 ubiquitin-conjugating enzyme]-L-cysteine + [acceptor protein]-L-lysine = [E2 ubiquitin-conjugating enzyme]-L-cysteine + N(6)-ubiquitinyl-[acceptor protein]-L-lysine.. Its pathway is protein modification; protein ubiquitination. E3 ubiquitin ligase. Mediates the ubiquitination and subsequent proteasomal degradation of CKM, GMEB1 and HIBADH. Regulates the proteasomal degradation of muscle proteins under amino acid starvation, where muscle protein is catabolized to provide other organs with amino acids. Inhibits de novo skeletal muscle protein synthesis under amino acid starvation. Regulates proteasomal degradation of cardiac troponin I/TNNI3 and probably of other sarcomeric-associated proteins. May play a role in striated muscle atrophy and hypertrophy by regulating an anti-hypertrophic PKC-mediated signaling pathway. May regulate the organization of myofibrils through TTN in muscle cells. This is E3 ubiquitin-protein ligase TRIM63 (Trim63) from Rattus norvegicus (Rat).